A 91-amino-acid polypeptide reads, in one-letter code: Small ribosomal subunit protein uS19 (91 aa).

Belongs to the universal ribosomal protein uS19 family.

Protein S19 forms a complex with S13 that binds strongly to the 16S ribosomal RNA. This chain is Small ribosomal subunit protein uS19, found in Pseudomonas fluorescens (strain Pf0-1).